The chain runs to 466 residues: Vacuolar protein sorting-associated protein 30 (466 aa).

Residues 35–55 form a disordered region; it reads SETNTDNSDNNKHNGENDRNI. Basic and acidic residues predominate over residues 43 to 53; sequence DNNKHNGENDR. Residues 149–258 adopt a coiled-coil conformation; sequence DTLLEKLKEE…QMEHLSFIKD (110 aa). Residues 279–463 are BARA; that stretch reads LNIYNETFRI…LAFSTSRINK (185 aa). Residues 439–464 are required for membrane-association, autophagic function during starvation and normal autophagosome morphology; it reads WTTACKFLLTNIKWLLAFSTSRINKA.

The protein belongs to the beclin family. As to quaternary structure, component of the autophagy-specific VPS34 PI3-kinase complex I; and of the VPS34 PI3-kinase complex II.

Its subcellular location is the endosome membrane. It localises to the vacuole membrane. The protein localises to the preautophagosomal structure membrane. Functionally, required for cytoplasm to vacuole transport (Cvt), autophagy, nucleophagy, and mitophagy, as a part of the autophagy-specific VPS34 PI3-kinase complex I. This complex is essential to recruit the ATG8-phosphatidylinositol conjugate and the ATG12-ATG5 conjugate to the pre-autophagosomal structure. Also involved in endosome-to-Golgi retrograde transport as part of the VPS34 PI3-kinase complex II. This is Vacuolar protein sorting-associated protein 30 from Kluyveromyces marxianus (strain DMKU3-1042 / BCC 29191 / NBRC 104275) (Yeast).